The primary structure comprises 154 residues: Homeobox protein engrailed (154 aa).

Residues 37–96 constitute a DNA-binding region (homeobox); that stretch reads EKRPRTAFSASQLQRLKQEFQQSNYLTEQRRRSLAKELTLSESQIKIWFQNKRAKIKKAS. The interval 127-154 is disordered; the sequence is KLLNGQNTSGDCSRSDYTSDSDGDSLTH. Residues 129-144 are compositionally biased toward polar residues; the sequence is LNGQNTSGDCSRSDYT. Residues 145-154 show a composition bias toward acidic residues; the sequence is SDSDGDSLTH.

It belongs to the engrailed homeobox family.

Its subcellular location is the nucleus. This is Homeobox protein engrailed (EN) from Tripneustes gratilla (Hawaian sea urchin).